The sequence spans 232 residues: Uracil-DNA glycosylase (232 aa).

D66 (proton acceptor) is an active-site residue.

This sequence belongs to the uracil-DNA glycosylase (UDG) superfamily. UNG family.

The protein resides in the cytoplasm. It carries out the reaction Hydrolyzes single-stranded DNA or mismatched double-stranded DNA and polynucleotides, releasing free uracil.. In terms of biological role, excises uracil residues from the DNA which can arise as a result of misincorporation of dUMP residues by DNA polymerase or due to deamination of cytosine. The protein is Uracil-DNA glycosylase of Lactobacillus acidophilus (strain ATCC 700396 / NCK56 / N2 / NCFM).